The chain runs to 306 residues: UDP-N-acetylenolpyruvoylglucosamine reductase (306 aa).

The 165-residue stretch at 29-193 (RVGGPADWLF…IRASLRGTPD (165 aa)) folds into the FAD-binding PCMH-type domain. R173 is an active-site residue. The active-site Proton donor is the S222. E292 is an active-site residue.

Belongs to the MurB family. FAD is required as a cofactor.

It is found in the cytoplasm. The enzyme catalyses UDP-N-acetyl-alpha-D-muramate + NADP(+) = UDP-N-acetyl-3-O-(1-carboxyvinyl)-alpha-D-glucosamine + NADPH + H(+). The protein operates within cell wall biogenesis; peptidoglycan biosynthesis. Its function is as follows. Cell wall formation. The sequence is that of UDP-N-acetylenolpyruvoylglucosamine reductase from Gluconobacter oxydans (strain 621H) (Gluconobacter suboxydans).